The chain runs to 523 residues: Beta-glucosidase 31 (523 aa).

Positions 1-22 are cleaved as a signal peptide; it reads MTPARVVFICCVVLLAAAAAAA. A beta-D-glucoside is bound by residues glutamine 49, histidine 149, and 194 to 195; that span reads NE. Glutamate 195 acts as the Proton donor in catalysis. A disulfide bridge links cysteine 214 with cysteine 223. Asparagine 227 carries an N-linked (GlcNAc...) asparagine glycan. A beta-D-glucoside-binding residues include tyrosine 339 and glutamate 413. Glutamate 413 acts as the Nucleophile in catalysis. A glycan (N-linked (GlcNAc...) asparagine) is linked at asparagine 450. Residues tryptophan 460, 467 to 468, and phenylalanine 476 each bind a beta-D-glucoside; that span reads EY.

Belongs to the glycosyl hydrolase 1 family.

The catalysed reaction is Hydrolysis of terminal, non-reducing beta-D-glucosyl residues with release of beta-D-glucose.. The protein is Beta-glucosidase 31 (BGLU31) of Oryza sativa subsp. japonica (Rice).